We begin with the raw amino-acid sequence, 35 residues long: Coenzyme PQQ synthesis protein A (35 aa).

Positions glutamate 16–tyrosine 20 form a cross-link, pyrroloquinoline quinone (Glu-Tyr).

This sequence belongs to the PqqA family.

It functions in the pathway cofactor biosynthesis; pyrroloquinoline quinone biosynthesis. Required for coenzyme pyrroloquinoline quinone (PQQ) biosynthesis. PQQ is probably formed by cross-linking a specific glutamate to a specific tyrosine residue and excising these residues from the peptide. In Ruegeria pomeroyi (strain ATCC 700808 / DSM 15171 / DSS-3) (Silicibacter pomeroyi), this protein is Coenzyme PQQ synthesis protein A.